The chain runs to 268 residues: Putative esterase/lipase 2 (268 aa).

His-29 is a catalytic residue. Ser-98 acts as the Charge relay system in catalysis.

Belongs to the lipase/esterase LIP3/BchO family.

This Mycoplasma genitalium (strain ATCC 33530 / DSM 19775 / NCTC 10195 / G37) (Mycoplasmoides genitalium) protein is Putative esterase/lipase 2.